Reading from the N-terminus, the 222-residue chain is Voltage-dependent calcium channel gamma-1 subunit (222 aa).

Over 1-10 (MSQTKMLKVR) the chain is Cytoplasmic. Residues 11 to 29 (VTLFCILAGIVLAMTAVVT) form a helical membrane-spanning segment. The Extracellular portion of the chain corresponds to 30 to 108 (DHWAVLSPHM…TQKEYSISAA (79 aa)). N-linked (GlcNAc...) asparagine glycans are attached at residues Asn-43 and Asn-79. Cys-57 and Cys-80 are disulfide-bonded. The chain crosses the membrane as a helical span at residues 109–129 (AIAIFSLGFIILGSLCVLLSL). Over 130-134 (GKKRD) the chain is Cytoplasmic. The chain crosses the membrane as a helical span at residues 135–155 (YLLRPASMFYAFAGLCILVSV). Topologically, residues 156–179 (EVMRQSVKRMIDSEDTVWIEYYYS) are extracellular. A helical membrane pass occupies residues 180 to 204 (WSFACACAAFILLFLGGLALLLFSL). At 205–222 (PRMPRNPWESCMDAEPEH) the chain is on the cytoplasmic side.

The protein belongs to the PMP-22/EMP/MP20 family. CACNG subfamily. As to quaternary structure, component of a calcium channel complex consisting of a pore-forming alpha subunit (CACNA1S) and the ancillary subunits CACNB1 or CACNB2, CACNG1 and CACNA2D1. The channel complex contains alpha, beta, gamma and delta subunits in a 1:1:1:1 ratio, i.e. it contains either CACNB1 or CACNB2. In terms of processing, N-glycosylated. In terms of tissue distribution, skeletal muscle.

Its subcellular location is the cell membrane. It is found in the sarcolemma. Its function is as follows. Regulatory subunit of the voltage-gated calcium channel that gives rise to L-type calcium currents in skeletal muscle. Regulates channel inactivation kinetics. In Homo sapiens (Human), this protein is Voltage-dependent calcium channel gamma-1 subunit (CACNG1).